Reading from the N-terminus, the 325-residue chain is ATP phosphoribosyltransferase (325 aa).

It belongs to the ATP phosphoribosyltransferase family. Long subfamily. The cofactor is Mg(2+).

It is found in the cytoplasm. The catalysed reaction is 1-(5-phospho-beta-D-ribosyl)-ATP + diphosphate = 5-phospho-alpha-D-ribose 1-diphosphate + ATP. It participates in amino-acid biosynthesis; L-histidine biosynthesis; L-histidine from 5-phospho-alpha-D-ribose 1-diphosphate: step 1/9. Feedback inhibited by histidine. Functionally, catalyzes the condensation of ATP and 5-phosphoribose 1-diphosphate to form N'-(5'-phosphoribosyl)-ATP (PR-ATP). Has a crucial role in the pathway because the rate of histidine biosynthesis seems to be controlled primarily by regulation of HisG enzymatic activity. This is ATP phosphoribosyltransferase from Nitrobacter hamburgensis (strain DSM 10229 / NCIMB 13809 / X14).